Reading from the N-terminus, the 482-residue chain is Glutamate--tRNA ligase 2 (482 aa).

The short motif at 16–26 is the 'HIGH' region element; sequence PSPTGYLHLGN. Residues Cys113, Cys115, Cys140, and His142 each coordinate Zn(2+). Residues 257–261 carry the 'KMSKS' region motif; the sequence is PLSKR. Lys260 is an ATP binding site.

The protein belongs to the class-I aminoacyl-tRNA synthetase family. Glutamate--tRNA ligase type 1 subfamily. In terms of assembly, monomer. Zn(2+) is required as a cofactor.

The protein resides in the cytoplasm. It carries out the reaction tRNA(Glu) + L-glutamate + ATP = L-glutamyl-tRNA(Glu) + AMP + diphosphate. Its function is as follows. Catalyzes the attachment of glutamate to tRNA(Glu) in a two-step reaction: glutamate is first activated by ATP to form Glu-AMP and then transferred to the acceptor end of tRNA(Glu). This chain is Glutamate--tRNA ligase 2, found in Acidithiobacillus ferrooxidans (strain ATCC 53993 / BNL-5-31) (Leptospirillum ferrooxidans (ATCC 53993)).